Consider the following 449-residue polypeptide: Kynurenine 3-monooxygenase (449 aa).

Belongs to the aromatic-ring hydroxylase family. KMO subfamily. FAD serves as cofactor.

It catalyses the reaction L-kynurenine + NADPH + O2 + H(+) = 3-hydroxy-L-kynurenine + NADP(+) + H2O. It participates in cofactor biosynthesis; NAD(+) biosynthesis; quinolinate from L-kynurenine: step 1/3. Catalyzes the hydroxylation of L-kynurenine (L-Kyn) to form 3-hydroxy-L-kynurenine (L-3OHKyn). Required for synthesis of quinolinic acid. The sequence is that of Kynurenine 3-monooxygenase from Cytophaga hutchinsonii (strain ATCC 33406 / DSM 1761 / CIP 103989 / NBRC 15051 / NCIMB 9469 / D465).